A 512-amino-acid chain; its full sequence is 2-isopropylmalate synthase (512 aa).

Residues 5–268 form the Pyruvate carboxyltransferase domain; the sequence is LIIFDTTLRD…DVDIETQHIL (264 aa). The Mn(2+) site is built by D14, H202, H204, and N239. The interval 394 to 512 is regulatory domain; the sequence is SFVSLSQHSE…SKADRVAAQG (119 aa).

It belongs to the alpha-IPM synthase/homocitrate synthase family. LeuA type 1 subfamily. Homodimer. Mn(2+) serves as cofactor.

The protein resides in the cytoplasm. It carries out the reaction 3-methyl-2-oxobutanoate + acetyl-CoA + H2O = (2S)-2-isopropylmalate + CoA + H(+). The protein operates within amino-acid biosynthesis; L-leucine biosynthesis; L-leucine from 3-methyl-2-oxobutanoate: step 1/4. Its function is as follows. Catalyzes the condensation of the acetyl group of acetyl-CoA with 3-methyl-2-oxobutanoate (2-ketoisovalerate) to form 3-carboxy-3-hydroxy-4-methylpentanoate (2-isopropylmalate). The protein is 2-isopropylmalate synthase of Albidiferax ferrireducens (strain ATCC BAA-621 / DSM 15236 / T118) (Rhodoferax ferrireducens).